Here is a 645-residue protein sequence, read N- to C-terminus: Rho GTPase-activating protein 25 (645 aa).

The PH domain maps to 46–151; it reads RPIKMGWLKK…WVKFLRRVAG (106 aa). A Rho-GAP domain is found at 159–353; sequence QRLDETVAYE…MMIRDHEVLF (195 aa). 2 disordered regions span residues 355-444 and 469-550; these read KSKD…QTLP and FWSP…EEEI. 2 positions are modified to phosphoserine: Ser-362 and Ser-395. Low complexity predominate over residues 393–409; sequence TDSFSSMTSDSDTTSPT. Residue Thr-406 is modified to Phosphothreonine. Residues 420-431 are compositionally biased toward basic and acidic residues; that stretch reads DSSKVPREKPGD. A compositionally biased stretch (polar residues) spans 487 to 504; sequence SQDLRQLSDSQRTSTYDN. Ser-536 is modified (phosphoserine). A coiled-coil region spans residues 541-644; that stretch reads GKKNSGEEEI…VKSMKEPKTE (104 aa).

Its function is as follows. GTPase activator for the Rho-type GTPases by converting them to an inactive GDP-bound state. The sequence is that of Rho GTPase-activating protein 25 (ARHGAP25) from Homo sapiens (Human).